Reading from the N-terminus, the 199-residue chain is Interferon kappa (199 aa).

An N-terminal signal peptide occupies residues 1–21 (MTPKFLWLVALVALYIPPIQS). 2 cysteine pairs are disulfide-bonded: Cys24–Cys119 and Cys49–Cys162.

Belongs to the alpha/beta interferon family. As to expression, expressed at low levels in peritoneal macrophages.

The protein localises to the secreted. Its function is as follows. May play a role in the regulation of immune cell function. This chain is Interferon kappa (Ifnk), found in Mus musculus (Mouse).